The sequence spans 164 residues: Biotin carboxyl carrier protein of acetyl-CoA carboxylase (164 aa).

The Biotinyl-binding domain occupies 86–162; the sequence is GDFIVSPLVG…QFGSKLFRIV (77 aa). N6-biotinyllysine is present on Lys-128.

In terms of assembly, homodimer.

It functions in the pathway lipid metabolism; fatty acid biosynthesis. Functionally, this protein is a component of the acetyl coenzyme A carboxylase complex; first, biotin carboxylase catalyzes the carboxylation of the carrier protein and then the transcarboxylase transfers the carboxyl group to form malonyl-CoA. The sequence is that of Biotin carboxyl carrier protein of acetyl-CoA carboxylase (accB) from Chlamydia trachomatis serovar D (strain ATCC VR-885 / DSM 19411 / UW-3/Cx).